The sequence spans 121 residues: SLTHRKFGGSGGSPFSGLSSIAVRSGSYLDXIIIDGVHHGGSGGNLSPTFTFGSGEYISNMTIRSGDYIDNISFETNMGRRFGPYGGSGGSANTLSNVKVIQINGSAGDYLDSLDIYYEQY.

The region spanning 1 to 120 (SLTHRKFGGS…LDSLDIYYEQ (120 aa)) is the Jacalin-type lectin domain.

Functionally, mixed specificity lectin with anti-HIV activity. Binds to HIV envelope glycoproteins, including exterior membrane glycoprotein gp120, and inhibits viral entry into cells. Binding to gp120 is dependent on gp120 being glycosylated, and is inhibited by mannose, glucose and N-acetylglucosamine. In Griffithsia sp. (strain Q66D336) (Red alga), this protein is Griffithsin.